We begin with the raw amino-acid sequence, 241 residues long: UDP-2,3-diacylglucosamine hydrolase (241 aa).

Residues aspartate 8, histidine 10, aspartate 41, asparagine 78, and histidine 113 each contribute to the Mn(2+) site. 78 to 79 (NR) serves as a coordination point for substrate. Residues aspartate 121, serine 159, asparagine 163, lysine 166, and histidine 194 each coordinate substrate. Mn(2+) contacts are provided by histidine 194 and histidine 196.

Belongs to the LpxH family. Requires Mn(2+) as cofactor.

The protein resides in the cell inner membrane. The catalysed reaction is UDP-2-N,3-O-bis[(3R)-3-hydroxytetradecanoyl]-alpha-D-glucosamine + H2O = 2-N,3-O-bis[(3R)-3-hydroxytetradecanoyl]-alpha-D-glucosaminyl 1-phosphate + UMP + 2 H(+). The protein operates within glycolipid biosynthesis; lipid IV(A) biosynthesis; lipid IV(A) from (3R)-3-hydroxytetradecanoyl-[acyl-carrier-protein] and UDP-N-acetyl-alpha-D-glucosamine: step 4/6. Hydrolyzes the pyrophosphate bond of UDP-2,3-diacylglucosamine to yield 2,3-diacylglucosamine 1-phosphate (lipid X) and UMP by catalyzing the attack of water at the alpha-P atom. Involved in the biosynthesis of lipid A, a phosphorylated glycolipid that anchors the lipopolysaccharide to the outer membrane of the cell. In Shewanella putrefaciens (strain CN-32 / ATCC BAA-453), this protein is UDP-2,3-diacylglucosamine hydrolase.